We begin with the raw amino-acid sequence, 154 residues long: Transcriptional repressor NrdR (154 aa).

The segment at 3–34 is a zinc-finger region; the sequence is CPFCRHPDSRVVDSRETDEGQAIRRRRSCPEC. The region spanning 46–136 is the ATP-cone domain; that stretch reads LAVVKRSGVT…VYRSFSSAED (91 aa).

The protein belongs to the NrdR family. Requires Zn(2+) as cofactor.

Its function is as follows. Negatively regulates transcription of bacterial ribonucleotide reductase nrd genes and operons by binding to NrdR-boxes. The polypeptide is Transcriptional repressor NrdR (Mycolicibacterium gilvum (strain PYR-GCK) (Mycobacterium gilvum (strain PYR-GCK))).